We begin with the raw amino-acid sequence, 208 residues long: Thiamine-phosphate synthase (208 aa).

Residues 36–40 and D68 each bind 4-amino-2-methyl-5-(diphosphooxymethyl)pyrimidine; that span reads QLRMK. 2 residues coordinate Mg(2+): D69 and D88. 4-amino-2-methyl-5-(diphosphooxymethyl)pyrimidine is bound at residue T107. Position 133 to 135 (133 to 135) interacts with 2-[(2R,5Z)-2-carboxy-4-methylthiazol-5(2H)-ylidene]ethyl phosphate; sequence TTT. Position 136 (K136) interacts with 4-amino-2-methyl-5-(diphosphooxymethyl)pyrimidine. G169 is a 2-[(2R,5Z)-2-carboxy-4-methylthiazol-5(2H)-ylidene]ethyl phosphate binding site.

The protein belongs to the thiamine-phosphate synthase family. Mg(2+) serves as cofactor.

The enzyme catalyses 2-[(2R,5Z)-2-carboxy-4-methylthiazol-5(2H)-ylidene]ethyl phosphate + 4-amino-2-methyl-5-(diphosphooxymethyl)pyrimidine + 2 H(+) = thiamine phosphate + CO2 + diphosphate. It carries out the reaction 2-(2-carboxy-4-methylthiazol-5-yl)ethyl phosphate + 4-amino-2-methyl-5-(diphosphooxymethyl)pyrimidine + 2 H(+) = thiamine phosphate + CO2 + diphosphate. The catalysed reaction is 4-methyl-5-(2-phosphooxyethyl)-thiazole + 4-amino-2-methyl-5-(diphosphooxymethyl)pyrimidine + H(+) = thiamine phosphate + diphosphate. Its pathway is cofactor biosynthesis; thiamine diphosphate biosynthesis; thiamine phosphate from 4-amino-2-methyl-5-diphosphomethylpyrimidine and 4-methyl-5-(2-phosphoethyl)-thiazole: step 1/1. Condenses 4-methyl-5-(beta-hydroxyethyl)thiazole monophosphate (THZ-P) and 2-methyl-4-amino-5-hydroxymethyl pyrimidine pyrophosphate (HMP-PP) to form thiamine monophosphate (TMP). In Phocaeicola vulgatus (strain ATCC 8482 / DSM 1447 / JCM 5826 / CCUG 4940 / NBRC 14291 / NCTC 11154) (Bacteroides vulgatus), this protein is Thiamine-phosphate synthase.